The chain runs to 492 residues: ATP synthase subunit beta, chloroplastic (492 aa).

Position 170–177 (170–177) interacts with ATP; it reads GGAGVGKT.

It belongs to the ATPase alpha/beta chains family. As to quaternary structure, F-type ATPases have 2 components, CF(1) - the catalytic core - and CF(0) - the membrane proton channel. CF(1) has five subunits: alpha(3), beta(3), gamma(1), delta(1), epsilon(1). CF(0) has four main subunits: a(1), b(1), b'(1) and c(9-12).

The protein resides in the plastid. It is found in the chloroplast thylakoid membrane. The enzyme catalyses ATP + H2O + 4 H(+)(in) = ADP + phosphate + 5 H(+)(out). Functionally, produces ATP from ADP in the presence of a proton gradient across the membrane. The catalytic sites are hosted primarily by the beta subunits. This is ATP synthase subunit beta, chloroplastic from Marchantia polymorpha (Common liverwort).